An 817-amino-acid chain; its full sequence is Dynamin-related protein 5A (817 aa).

Polar residues predominate over residues 1–20; that stretch reads MANSNTYLTTPTKTPSSRRN. Residues 1–37 form a disordered region; that stretch reads MANSNTYLTTPTKTPSSRRNQQSQSKMQSHSKDPINA. In terms of domain architecture, Dynamin-type G spans 59–346; sequence KLPIPEIVAI…LQKRYKEAAP (288 aa). The interval 69–76 is G1 motif; it reads GGQSDGKS. GTP is bound at residue 69 to 76; it reads GGQSDGKS. Residues 95–97 form a G2 motif region; it reads GTR. Residues 175 to 178 form a G3 motif region; the sequence is DTPG. Residues 175–179 and 244–247 each bind GTP; these read DTPGF and SKFD. Positions 244 to 247 are G4 motif; it reads SKFD. A G5 motif region spans residues 280 to 283; sequence LPKD. 2 disordered regions span residues 405 to 425 and 616 to 658; these read APEQWGKTTEEERGESGIGSW and LSDT…ETPS. Positions 618 to 629 are enriched in basic and acidic residues; the sequence is DTSRDEPMKDQE.

It belongs to the TRAFAC class dynamin-like GTPase superfamily. Dynamin/Fzo/YdjA family. Expressed in root and leaf meristems.

It is found in the cytoplasm. The protein resides in the cytoskeleton. It localises to the phragmoplast. Its function is as follows. Probable microtubule-associated force-producing protein that is targeted to the forming cell plate during cytokinesis. May play a role in cell division. The chain is Dynamin-related protein 5A (DRP5A) from Arabidopsis thaliana (Mouse-ear cress).